Here is a 222-residue protein sequence, read N- to C-terminus: Sugar fermentation stimulation protein homolog (222 aa).

It belongs to the SfsA family.

The chain is Sugar fermentation stimulation protein homolog from Thermoplasma acidophilum (strain ATCC 25905 / DSM 1728 / JCM 9062 / NBRC 15155 / AMRC-C165).